The following is a 218-amino-acid chain: Large ribosomal subunit protein uL3 (218 aa).

It belongs to the universal ribosomal protein uL3 family. In terms of assembly, part of the 50S ribosomal subunit. Forms a cluster with proteins L14 and L19.

Its function is as follows. One of the primary rRNA binding proteins, it binds directly near the 3'-end of the 23S rRNA, where it nucleates assembly of the 50S subunit. This chain is Large ribosomal subunit protein uL3, found in Corynebacterium jeikeium (strain K411).